A 171-amino-acid polypeptide reads, in one-letter code: Large ribosomal subunit protein uL10 (171 aa).

The protein belongs to the universal ribosomal protein uL10 family. As to quaternary structure, part of the ribosomal stalk of the 50S ribosomal subunit. The N-terminus interacts with L11 and the large rRNA to form the base of the stalk. The C-terminus forms an elongated spine to which L12 dimers bind in a sequential fashion forming a multimeric L10(L12)X complex.

Forms part of the ribosomal stalk, playing a central role in the interaction of the ribosome with GTP-bound translation factors. The protein is Large ribosomal subunit protein uL10 of Phenylobacterium zucineum (strain HLK1).